The primary structure comprises 161 residues: Cell division control protein 31 (161 aa).

EF-hand domains lie at Glu-20 to Glu-55, Leu-56 to Lys-91, Asp-93 to Thr-128, and Leu-129 to Ser-161. Ca(2+) is bound by residues Asp-33, Asn-35, Asp-37, and Glu-44. Residue Thr-130 is modified to Phosphothreonine. Ca(2+) contacts are provided by Asp-142, Asp-144, Asp-146, Glu-148, and Glu-153.

It belongs to the centrin family. As to quaternary structure, component of the spindle pole body (SPB), acting as the connector of microtubule arrays in the cytoplasm and the nucleoplasm, is involved in nuclear positioning before chromosome segregation, SPB separation, spindle formation, chromosome segregation, nuclear migration into the bud, nuclear reorientation after cytokinesis and nuclear fusion during conjugation. The SPB half-bridge, which is tightly associated with the cytoplasmic side of the nuclear envelope and the SPB, is playing a key role as the starting structure for and in the initiation of SPB duplication in G1. At the SPB half-bridge CDC31 interacts with KAR1, MPS3 and SFI1. Interacts with KIC1. Interacts with VPS13. Associates with nuclear pore complexes (NPCs).

The protein localises to the nucleus envelope. The protein resides in the cytoplasm. It localises to the cytoskeleton. Its subcellular location is the microtubule organizing center. It is found in the spindle pole body. In terms of biological role, functions as a component of the spindle pole body (SPB) half-bridge. At the SPB, it is recruited by KAR1 and MPS3 to the SPB half-bridge and involved in the initial steps of SPB duplication. Also involved in connection with the protein kinase KIC1 in the maintenance of cell morphology and integrity. May play a role in vesicle-mediated transport, in a VPS13-dependent manner. The polypeptide is Cell division control protein 31 (CDC31) (Saccharomyces cerevisiae (strain ATCC 204508 / S288c) (Baker's yeast)).